Reading from the N-terminus, the 234-residue chain is Glucosamine-6-phosphate deaminase (234 aa).

The Proton acceptor; for enolization step role is filled by Asp62. The For ring-opening step role is filled by Asn128. His130 (proton acceptor; for ring-opening step) is an active-site residue. Glu135 acts as the For ring-opening step in catalysis.

The protein belongs to the glucosamine/galactosamine-6-phosphate isomerase family. NagB subfamily.

The enzyme catalyses alpha-D-glucosamine 6-phosphate + H2O = beta-D-fructose 6-phosphate + NH4(+). It participates in amino-sugar metabolism; N-acetylneuraminate degradation; D-fructose 6-phosphate from N-acetylneuraminate: step 5/5. Catalyzes the reversible isomerization-deamination of glucosamine 6-phosphate (GlcN6P) to form fructose 6-phosphate (Fru6P) and ammonium ion. This Streptococcus equi subsp. zooepidemicus (strain H70) protein is Glucosamine-6-phosphate deaminase.